The sequence spans 305 residues: Glutaminase (305 aa).

Ser61, Asn113, Glu158, Asn165, Tyr189, Tyr241, and Val259 together coordinate substrate.

This sequence belongs to the glutaminase family. As to quaternary structure, homotetramer.

The enzyme catalyses L-glutamine + H2O = L-glutamate + NH4(+). In Clostridium botulinum (strain ATCC 19397 / Type A), this protein is Glutaminase.